The primary structure comprises 37 residues: Mating pheromone Er-22 (37 aa).

3 disulfides stabilise this stretch: cysteine 3-cysteine 18, cysteine 10-cysteine 32, and cysteine 15-cysteine 24.

The protein resides in the secreted. Mating ciliate pheromones (or gamones) are diffusible extracellular communication signals that distinguish different intraspecific classes of cells commonly referred to as 'mating types'. They prepare the latter for conjugation by changing their cell surface properties. The sequence is that of Mating pheromone Er-22 (MAT22) from Euplotes raikovi.